The primary structure comprises 152 residues: Acidic phospholipase A2 S17-58 (152 aa).

An N-terminal signal peptide occupies residues 1 to 19 (MYPAHLLVLLAVCVSLLGA). A propeptide spanning residues 20 to 27 (SNIPLPSL) is cleaved from the precursor. 7 disulfide bridges follow: C38–C104, C54–C151, C56–C72, C71–C132, C78–C125, C88–C118, and C111–C123. Residues Y55, G57, and G59 each contribute to the Ca(2+) site. The active site involves H75. D76 lines the Ca(2+) pocket. D126 is an active-site residue.

Belongs to the phospholipase A2 family. Group I subfamily. D49 sub-subfamily. Ca(2+) serves as cofactor. As to expression, expressed by the venom gland.

The protein localises to the secreted. It carries out the reaction a 1,2-diacyl-sn-glycero-3-phosphocholine + H2O = a 1-acyl-sn-glycero-3-phosphocholine + a fatty acid + H(+). Functionally, snake venom phospholipase A2 (PLA2) that inhibits collagen-induced platelet aggregation. PLA2 catalyzes the calcium-dependent hydrolysis of the 2-acyl groups in 3-sn-phosphoglycerides. The polypeptide is Acidic phospholipase A2 S17-58 (Austrelaps superbus (Lowland copperhead snake)).